The sequence spans 269 residues: Hydroxyethylthiazole kinase (269 aa).

Residue M46 participates in substrate binding. Positions 122 and 168 each coordinate ATP. G195 serves as a coordination point for substrate.

The protein belongs to the Thz kinase family. Mg(2+) is required as a cofactor.

The catalysed reaction is 5-(2-hydroxyethyl)-4-methylthiazole + ATP = 4-methyl-5-(2-phosphooxyethyl)-thiazole + ADP + H(+). The protein operates within cofactor biosynthesis; thiamine diphosphate biosynthesis; 4-methyl-5-(2-phosphoethyl)-thiazole from 5-(2-hydroxyethyl)-4-methylthiazole: step 1/1. Its function is as follows. Catalyzes the phosphorylation of the hydroxyl group of 4-methyl-5-beta-hydroxyethylthiazole (THZ). The polypeptide is Hydroxyethylthiazole kinase (Geobacillus kaustophilus (strain HTA426)).